The following is a 453-amino-acid chain: T-box transcription factor T homolog (453 aa).

Positions 47–217 (LWRRFSKLTN…YNPFAKAFLD (171 aa)) form a DNA-binding region, T-box. The tract at residues 283–304 (RSHRSTPYPPPPYEQKYSPTSA) is disordered.

Its subcellular location is the nucleus. Its function is as follows. May be involved in the transcriptional regulation of genes required for gastrulation. The protein is T-box transcription factor T homolog of Patiria pectinifera (Starfish).